The sequence spans 22 residues: Motilin (22 aa).

The segment at 1 to 22 is disordered; the sequence is FVPIFTHSELQKIREKERNKGQ. Residues 9 to 22 are compositionally biased toward basic and acidic residues; it reads ELQKIREKERNKGQ.

It belongs to the motilin family.

The protein resides in the secreted. In terms of biological role, plays an important role in the regulation of interdigestive gastrointestinal motility and indirectly causes rhythmic contraction of duodenal and colonic smooth muscle. In Canis lupus familiaris (Dog), this protein is Motilin (MLN).